A 1147-amino-acid polypeptide reads, in one-letter code: ATP-dependent helicase/deoxyribonuclease subunit B (1147 aa).

8 to 15 (GGSGAGKS) serves as a coordination point for ATP. [4Fe-4S] cluster is bound by residues cysteine 780, cysteine 1092, cysteine 1095, and cysteine 1101.

This sequence belongs to the helicase family. AddB/RexB type 1 subfamily. Heterodimer of AddA and AddB. Mg(2+) is required as a cofactor. [4Fe-4S] cluster serves as cofactor.

In terms of biological role, the heterodimer acts as both an ATP-dependent DNA helicase and an ATP-dependent, dual-direction single-stranded exonuclease. Recognizes the chi site generating a DNA molecule suitable for the initiation of homologous recombination. The AddB subunit has 5' -&gt; 3' nuclease activity but not helicase activity. The polypeptide is ATP-dependent helicase/deoxyribonuclease subunit B (Lachnoclostridium phytofermentans (strain ATCC 700394 / DSM 18823 / ISDg) (Clostridium phytofermentans)).